The primary structure comprises 76 residues: Small ribosomal subunit protein bS21A (76 aa).

Residues 35-52 (HYEKPSEKRAREKAEAVR) show a composition bias toward basic and acidic residues. The tract at residues 35-76 (HYEKPSEKRAREKAEAVRRARKLARKRAQREGLVSGRPAAAR) is disordered. Residues 53 to 62 (RARKLARKRA) show a composition bias toward basic residues.

It belongs to the bacterial ribosomal protein bS21 family.

This Chelativorans sp. (strain BNC1) protein is Small ribosomal subunit protein bS21A.